The following is a 174-amino-acid chain: uncharacterized protein (174 aa).

Residues 7–27 traverse the membrane as a helical segment; that stretch reads LIILAIFTLWVGGFGYYLYLI.

Its subcellular location is the membrane. This is an uncharacterized protein from Rickettsia prowazekii (strain Madrid E).